The following is a 436-amino-acid chain: Histidine--tRNA ligase (436 aa).

Belongs to the class-II aminoacyl-tRNA synthetase family. In terms of assembly, homodimer.

Its subcellular location is the cytoplasm. The enzyme catalyses tRNA(His) + L-histidine + ATP = L-histidyl-tRNA(His) + AMP + diphosphate + H(+). This Prochlorococcus marinus (strain MIT 9313) protein is Histidine--tRNA ligase.